The sequence spans 88 residues: UPF0250 protein PM1928 (88 aa).

This sequence belongs to the UPF0250 family.

This is UPF0250 protein PM1928 from Pasteurella multocida (strain Pm70).